Here is a 540-residue protein sequence, read N- to C-terminus: Glucose-6-phosphate isomerase (540 aa).

Glutamate 350 serves as the catalytic Proton donor. Active-site residues include histidine 381 and lysine 503.

The protein belongs to the GPI family.

It is found in the cytoplasm. It catalyses the reaction alpha-D-glucose 6-phosphate = beta-D-fructose 6-phosphate. The protein operates within carbohydrate biosynthesis; gluconeogenesis. Its pathway is carbohydrate degradation; glycolysis; D-glyceraldehyde 3-phosphate and glycerone phosphate from D-glucose: step 2/4. Functionally, catalyzes the reversible isomerization of glucose-6-phosphate to fructose-6-phosphate. This is Glucose-6-phosphate isomerase from Burkholderia mallei (strain NCTC 10247).